A 46-amino-acid chain; its full sequence is U-limacoditoxin(6)-Dv61 (46 aa).

An N-terminal signal peptide occupies residues 1 to 19 (MSKLLVLLMTTALATLAQA).

Belongs to the limacoditoxin-6 family. As to expression, expressed by the venom secretory cell of the spine. The spine is a cuticular structure containing a single large nucleated venom-secreting cell at its base. It is an independent unit capable of producing, storing and injecting venom. On the back of D.vulnerans caterpillars, spines are grouped together by 50 to 100 to form scoli, of which there are eight in D.vulnerans.

The protein resides in the secreted. Probable toxin. Does not show insecticidal, antimicrobial and antiparasitic activities. Does not induce increase in intracellular calcium in mouse DRG neurons, suggesting that it does not induce pain. The polypeptide is U-limacoditoxin(6)-Dv61 (Doratifera vulnerans (Mottled cup moth)).